Consider the following 412-residue polypeptide: ATP phosphoribosyltransferase regulatory subunit (412 aa).

Belongs to the class-II aminoacyl-tRNA synthetase family. HisZ subfamily. Heteromultimer composed of HisG and HisZ subunits.

It is found in the cytoplasm. The protein operates within amino-acid biosynthesis; L-histidine biosynthesis; L-histidine from 5-phospho-alpha-D-ribose 1-diphosphate: step 1/9. In terms of biological role, required for the first step of histidine biosynthesis. May allow the feedback regulation of ATP phosphoribosyltransferase activity by histidine. The chain is ATP phosphoribosyltransferase regulatory subunit from Dehalococcoides mccartyi (strain CBDB1).